The following is a 606-amino-acid chain: NADH-ubiquinone oxidoreductase chain 5 (606 aa).

The next 16 membrane-spanning stretches (helical) occupy residues 4–24, 38–58, 87–107, 114–134, 140–160, 171–191, 213–233, 241–261, 273–293, 301–320, 325–347, 366–386, 409–429, 457–477, 488–508, and 583–603; these read FPSL…TTTI, NIIS…IHSG, MIFV…SMWY, ITQF…LVTA, LFIG…WWYG, AILY…WFLF, LMGL…HPWL, TPVS…FLLI, VQTF…ICAL, IIAF…IGIN, AFLH…GSII, MPFT…MPFL, LLIT…MIFF, LLIG…PTTI, LTAL…SLAT, and LIKL…LLLM.

It belongs to the complex I subunit 5 family. As to quaternary structure, core subunit of respiratory chain NADH dehydrogenase (Complex I) which is composed of 45 different subunits.

It is found in the mitochondrion inner membrane. The enzyme catalyses a ubiquinone + NADH + 5 H(+)(in) = a ubiquinol + NAD(+) + 4 H(+)(out). Its function is as follows. Core subunit of the mitochondrial membrane respiratory chain NADH dehydrogenase (Complex I) which catalyzes electron transfer from NADH through the respiratory chain, using ubiquinone as an electron acceptor. Essential for the catalytic activity and assembly of complex I. This chain is NADH-ubiquinone oxidoreductase chain 5 (MT-ND5), found in Ceratotherium simum (White rhinoceros).